Here is a 475-residue protein sequence, read N- to C-terminus: Equilibrative nucleoside transporter 3 (475 aa).

Positions 1–24 (MAVVSEDDFQHSSNSTYRTTSSSL) are disordered. The Cytoplasmic segment spans residues 1–53 (MAVVSEDDFQHSSNSTYRTTSSSLRADQEALLEKLLDRPPPGLQRPEDRFCGT). The span at 12–23 (SSNSTYRTTSSS) shows a compositional bias: low complexity. A phosphoserine mark is found at serine 21 and serine 23. The Dileucine internalization motif motif lies at 31 to 32 (LL). The chain crosses the membrane as a helical span at residues 54 to 74 (YIIFFSLGIGSLLPWNFFITA). At 75–105 (KEYWMFKLRNSSSPATGEDPEGSDILNYFES) the chain is on the extracellular side. N-linked (GlcNAc...) asparagine glycosylation is present at asparagine 84. A helical membrane pass occupies residues 106–126 (YLAVASTVPSMLCLVANFLLV). At 127–134 (NRVAVHIR) the chain is on the cytoplasmic side. The chain crosses the membrane as a helical span at residues 135–155 (VLASLTVILAIFMVITALVKV). Topologically, residues 156–162 (DTSSWTR) are extracellular. A helical transmembrane segment spans residues 163 to 183 (GFFAVTIVCMVILSGASTVFS). At 184–199 (SSIYGMTGSFPMRNSQ) the chain is on the cytoplasmic side. A helical transmembrane segment spans residues 200–220 (ALISGGAMGGTVSAVASLVDL). Residues 221–230 (AASSDVRNSA) are Extracellular-facing. A helical transmembrane segment spans residues 231 to 251 (LAFFLTATVFLVLCMGLYLLL). The Cytoplasmic portion of the chain corresponds to 252-305 (SRLEYARYYMRPVLAAHVFSGEEELPQDSLSAPSVASRFIDSHTPPLRPILKKT). A helical transmembrane segment spans residues 306-326 (ASLGFCVTYVFFITSLIYPAI). Over 327–337 (CTNIESLNKGS) the chain is Extracellular. The helical transmembrane segment at 338–358 (GSLWTTKFFIPLTTFLLYNFA) threads the bilayer. Topologically, residues 359–377 (DLCGRQLTAWIQVPGPNSK) are cytoplasmic. A helical transmembrane segment spans residues 378 to 398 (ALPGFVLLRTCLIPLFVLCNY). At 399-415 (QPRVHLKTVVFQSDVYP) the chain is on the extracellular side. Residues 416 to 436 (ALLSSLLGLSNGYLSTLALLY) form a helical membrane-spanning segment. At 437–454 (GPKIVPRELAEATGVVMS) the chain is on the cytoplasmic side. Residues 455 to 475 (FYVCLGLTLGSACSTLLVHLI) form a helical membrane-spanning segment.

It belongs to the SLC29A/ENT transporter (TC 2.A.57) family. In terms of tissue distribution, widely expressed in both adult and fetal tissues. Highest levels in placenta, uterus, ovary, spleen, lymph node and bone marrow. Expressed in liver. Lowest levels in brain and heart. Expressed in macrophages.

It is found in the lysosome membrane. The protein localises to the late endosome membrane. It localises to the mitochondrion membrane. The protein resides in the cell membrane. The enzyme catalyses adenosine(in) = adenosine(out). It catalyses the reaction guanosine(in) = guanosine(out). The catalysed reaction is inosine(in) = inosine(out). It carries out the reaction uridine(out) = uridine(in). The enzyme catalyses cytidine(in) = cytidine(out). It catalyses the reaction thymidine(in) = thymidine(out). The catalysed reaction is 2'-deoxyadenosine(in) = 2'-deoxyadenosine(out). It carries out the reaction 2'-deoxycytidine(in) = 2'-deoxycytidine(out). The enzyme catalyses guanine(out) = guanine(in). It catalyses the reaction uracil(in) = uracil(out). The catalysed reaction is (R)-noradrenaline(out) = (R)-noradrenaline(in). It carries out the reaction dopamine(out) = dopamine(in). The enzyme catalyses serotonin(out) = serotonin(in). It catalyses the reaction tyramine(in) = tyramine(out). The catalysed reaction is ATP(in) = ATP(out). In terms of biological role, uniporter that mediates the facilitative transport of nucleoside across lysosomal and mitochondrial membranes. Functions as a non-electrogenic Na(+)-independent transporter. Substrate transport is pH-dependent and enhanced under acidic condition, probably reflecting the location of the transporter in acidic intracellular compartments. Proton is not a cotransporting ion but most likely change the ionization state of the transporter which dictates transport-permissible/impermissible conformation for nucleoside translocation. May direct the nucleoside transport from lysosomes to cytosol or cytosol to mitochondria to facilitate the fundamental function of salvage synthesis of nucleic acids. Involved in the transport of nucleosides (adenosine, guanosine, uridine, thymidine, cytidine and inosine) and deoxynucleosides (deoxyadenosine, deoxycytidine). Also mediates transport of purine nucleobases (adenine, guanine) and pyrimidine nucleobases (uracil). Also able to transport monoamine neurotransmitters dopamine, serotonin, noradrenaline and tyramine. Capable of transporting ATP. Mediates nucleoside export from lysosomes in macrophages, which regulates macrophage functions and numbers. In Homo sapiens (Human), this protein is Equilibrative nucleoside transporter 3.